Reading from the N-terminus, the 235-residue chain is Regulator of G-protein signaling 9-binding protein (235 aa).

The Cytoplasmic segment spans residues 1–210 (MAREECKALL…ERGGGCDPRK (210 aa)). Coiled-coil stretches lie at residues 29-54 (GSAD…AVST) and 144-169 (VADL…MKVN). Residues 153–200 (EVLQVGEMIDNMEMKVNVPRWTVQARQAAGAELLSTVSAGPSSVVSLQ) form an SNARE-like region. A helical; Anchor for type IV membrane protein transmembrane segment spans residues 211 to 231 (ALAAILFGAVLLAAVALAVCV). Over 232–235 (AKLS) the chain is Extracellular.

This sequence belongs to the RGS7BP/RGS9BP family. As to quaternary structure, specifically interacts with isoform RGS9-1 of RGS9. Component of the RGS9-1-Gbeta5 complex composed of RGS9-1, Gbeta5 (GNB5) and RGS9BP.

It localises to the membrane. Functionally, regulator of G protein-coupled receptor (GPCR) signaling in phototransduction. Participates in the recovery phase of visual transduction via its interaction with RGS9-1 isoform. Acts as a membrane-anchor that mediates the targeting of RGS9-1 to the photoreceptor outer segment, where phototransduction takes place. Enhances the ability of RGS9-1 to stimulate G protein GTPase activity, allowing the visual signal to be terminated on the physiologically time scale. It also controls the proteolytic stability of RGS9-1, probably by protecting it from degradation. The chain is Regulator of G-protein signaling 9-binding protein (RGS9BP) from Homo sapiens (Human).